Consider the following 339-residue polypeptide: NADH-quinone oxidoreductase subunit H (339 aa).

The next 9 helical transmembrane spans lie at 10–30, 50–70, 82–102, 115–135, 155–175, 187–207, 235–255, 275–295, and 311–331; these read FPLT…ILCV, PNVV…KLLF, ILFI…WAVI, VGVL…IIAG, ISYE…TGTL, LPWW…ISVL, MGFA…SAMT, IPGF…FLWI, and GWKV…SVLF.

The protein belongs to the complex I subunit 1 family. As to quaternary structure, NDH-1 is composed of 14 different subunits. Subunits NuoA, H, J, K, L, M, N constitute the membrane sector of the complex.

Its subcellular location is the cell inner membrane. It catalyses the reaction a quinone + NADH + 5 H(+)(in) = a quinol + NAD(+) + 4 H(+)(out). NDH-1 shuttles electrons from NADH, via FMN and iron-sulfur (Fe-S) centers, to quinones in the respiratory chain. The immediate electron acceptor for the enzyme in this species is believed to be ubiquinone. Couples the redox reaction to proton translocation (for every two electrons transferred, four hydrogen ions are translocated across the cytoplasmic membrane), and thus conserves the redox energy in a proton gradient. This subunit may bind ubiquinone. The protein is NADH-quinone oxidoreductase subunit H of Rickettsia typhi (strain ATCC VR-144 / Wilmington).